We begin with the raw amino-acid sequence, 120 residues long: Large ribosomal subunit protein uL24 (120 aa).

It belongs to the universal ribosomal protein uL24 family. As to quaternary structure, part of the 50S ribosomal subunit.

Its function is as follows. One of two assembly initiator proteins, it binds directly to the 5'-end of the 23S rRNA, where it nucleates assembly of the 50S subunit. Functionally, located at the polypeptide exit tunnel on the outside of the subunit. This is Large ribosomal subunit protein uL24 from Methanocaldococcus jannaschii (strain ATCC 43067 / DSM 2661 / JAL-1 / JCM 10045 / NBRC 100440) (Methanococcus jannaschii).